A 246-amino-acid chain; its full sequence is MPQFSVDLCLFDLDGTIVSTTTAAESAWKKLCRQHGVDPVELFKHSHGARSQEMMKKFFPKLDNTDNKGVLALEKDMADNYLDTVSLIPGAENLLLSLDVDTETQKKLPERKWAIVTSGSPYLAFSWFETILKNVGKPKVFITGFDVKNGKPDPEGYSRARDLLRQDLQLTGKQDLKYVVFEDAPVGIKAGKAMGAITVGITSSYDKSVLFDAGADYVVCDLTQVSVVKNNENGIVIQVNNPLTRD.

The Nucleophile role is filled by Asp83. Asp83 lines the Mg(2+) pocket. Substrate-binding positions include Asp83, Glu92, and 146 to 149 (DVKN). Residue Asp183 participates in Mg(2+) binding.

This sequence belongs to the HAD-like hydrolase superfamily. DOG/GPP family. Mg(2+) is required as a cofactor.

The enzyme catalyses 2-deoxy-D-glucose 6-phosphate + H2O = 2-deoxy-D-glucose + phosphate. In terms of biological role, phosphatase that is active on 2-deoxy-D-glucose 6-phosphate (2-DOG-6P), but not very active on fructose-1-P. This Saccharomyces cerevisiae (strain ATCC 204508 / S288c) (Baker's yeast) protein is 2-deoxyglucose-6-phosphate phosphatase 2.